Here is a 204-residue protein sequence, read N- to C-terminus: Large ribosomal subunit protein uL4 (204 aa).

The disordered stretch occupies residues 44–76; the sequence is KRQGTQSAKTRSEVRGGGIKPWRQKGTGRARQG.

It belongs to the universal ribosomal protein uL4 family. Part of the 50S ribosomal subunit.

Functionally, one of the primary rRNA binding proteins, this protein initially binds near the 5'-end of the 23S rRNA. It is important during the early stages of 50S assembly. It makes multiple contacts with different domains of the 23S rRNA in the assembled 50S subunit and ribosome. In terms of biological role, forms part of the polypeptide exit tunnel. In Clostridium perfringens (strain ATCC 13124 / DSM 756 / JCM 1290 / NCIMB 6125 / NCTC 8237 / Type A), this protein is Large ribosomal subunit protein uL4.